Reading from the N-terminus, the 71-residue chain is Translational regulator CsrA (71 aa).

Residues 50–71 are disordered; the sequence is RIRHEKDGDVPEAAPGQGADPQ.

The protein belongs to the CsrA/RsmA family. In terms of assembly, homodimer; the beta-strands of each monomer intercalate to form a hydrophobic core, while the alpha-helices form wings that extend away from the core.

The protein localises to the cytoplasm. Its function is as follows. A key translational regulator that binds mRNA to regulate translation initiation and/or mRNA stability. Mediates global changes in gene expression, shifting from rapid growth to stress survival by linking envelope stress, the stringent response and the catabolite repression systems. Usually binds in the 5'-UTR; binding at or near the Shine-Dalgarno sequence prevents ribosome-binding, repressing translation, binding elsewhere in the 5'-UTR can activate translation and/or stabilize the mRNA. Its function is antagonized by small RNA(s). This is Translational regulator CsrA from Halorhodospira halophila (strain DSM 244 / SL1) (Ectothiorhodospira halophila (strain DSM 244 / SL1)).